We begin with the raw amino-acid sequence, 399 residues long: MASAAAGEAEETTRLRKPRFSFEENQILIREVRAHYPQLYGAQSRRVSVAERRRVWDGIAAKINGITSWKRTGQEVQKRWNDFKRRTKEKLARVPHSTQGAGPAAEDAFSAEEETIFAILGPGVAAPGAGAGAEEPPAAPSSQPPPPSACPQRYVLSEDRREDRRADTSAHSKAGSSSPEPWARPSCTPQEGGCPRPKERESPPPSALQPVQLPRLALSPPPPAPPLPPPPPLAQVAPSPPSPPPPPRPPPTLSASDPSLDFLRAQQETANAIRELAGTLRQGLAKLSEALSALLPLLPGTPVDSLPPPLPPPPPPPPPPRPVLPPPAPKVEITPEPVSVVAAVVDGAVVAARGVIIAPRSEEGAPRPPPAPLPPHDSPPHKRRKGFPTRKRRGRWKSP.

In terms of domain architecture, Myb-like spans 12–84 (TTRLRKPRFS…EVQKRWNDFK (73 aa)). Positions 83 to 86 (FKRR) match the Nuclear localization signal motif. Disordered stretches follow at residues 87–108 (TKEK…AEDA), 127–261 (PGAG…PSLD), 297–332 (LLPG…PKVE), and 358–399 (APRS…WKSP). The span at 127-136 (PGAGAGAEEP) shows a compositional bias: low complexity. Positions 137-149 (PAAPSSQPPPPSA) are enriched in pro residues. A compositionally biased stretch (basic and acidic residues) spans 156–170 (LSEDRREDRRADTSA). 3 stretches are compositionally biased toward pro residues: residues 219–252 (SPPP…PPPT), 305–329 (SLPP…PPAP), and 366–377 (PRPPPAPLPPHD). A compositionally biased stretch (basic residues) spans 381 to 399 (HKRRKGFPTRKRRGRWKSP). 2 short sequence motifs (nuclear localization signal) span residues 382-385 (KRRK) and 390-393 (RKRR).

In terms of assembly, interacts with PFN1. Homodimer and heterodimer with PFN1.

It is found in the nucleus. In terms of biological role, transcriptional repressor; DNA-binding protein that specifically recognizes the core sequence 5'-YAAC[GT]G-3'. Dimerization with PFN1 reduces its DNA-binding capacity. This Homo sapiens (Human) protein is Myb-related transcription factor, partner of profilin (MYPOP).